The sequence spans 337 residues: Holliday junction branch migration complex subunit RuvB (337 aa).

The large ATPase domain (RuvB-L) stretch occupies residues 4–186 (ADRLIAADNP…FGIVQRLEYY (183 aa)). Residues I25, R26, G67, K70, T71, T72, 133 to 135 (EDY), R176, Y186, and R223 contribute to the ATP site. A Mg(2+)-binding site is contributed by T71. Positions 187-257 (KVEDLQHIVQ…IADKALNMLD (71 aa)) are small ATPAse domain (RuvB-S). Residues 260-337 (VRGFDYMDRK…LHFGIDKPDK (78 aa)) are head domain (RuvB-H). DNA is bound by residues R296, R315, and R320.

The protein belongs to the RuvB family. In terms of assembly, homohexamer. Forms an RuvA(8)-RuvB(12)-Holliday junction (HJ) complex. HJ DNA is sandwiched between 2 RuvA tetramers; dsDNA enters through RuvA and exits via RuvB. An RuvB hexamer assembles on each DNA strand where it exits the tetramer. Each RuvB hexamer is contacted by two RuvA subunits (via domain III) on 2 adjacent RuvB subunits; this complex drives branch migration. In the full resolvosome a probable DNA-RuvA(4)-RuvB(12)-RuvC(2) complex forms which resolves the HJ.

Its subcellular location is the cytoplasm. The enzyme catalyses ATP + H2O = ADP + phosphate + H(+). In terms of biological role, the RuvA-RuvB-RuvC complex processes Holliday junction (HJ) DNA during genetic recombination and DNA repair, while the RuvA-RuvB complex plays an important role in the rescue of blocked DNA replication forks via replication fork reversal (RFR). RuvA specifically binds to HJ cruciform DNA, conferring on it an open structure. The RuvB hexamer acts as an ATP-dependent pump, pulling dsDNA into and through the RuvAB complex. RuvB forms 2 homohexamers on either side of HJ DNA bound by 1 or 2 RuvA tetramers; 4 subunits per hexamer contact DNA at a time. Coordinated motions by a converter formed by DNA-disengaged RuvB subunits stimulates ATP hydrolysis and nucleotide exchange. Immobilization of the converter enables RuvB to convert the ATP-contained energy into a lever motion, pulling 2 nucleotides of DNA out of the RuvA tetramer per ATP hydrolyzed, thus driving DNA branch migration. The RuvB motors rotate together with the DNA substrate, which together with the progressing nucleotide cycle form the mechanistic basis for DNA recombination by continuous HJ branch migration. Branch migration allows RuvC to scan DNA until it finds its consensus sequence, where it cleaves and resolves cruciform DNA. The polypeptide is Holliday junction branch migration complex subunit RuvB (Aliivibrio fischeri (strain ATCC 700601 / ES114) (Vibrio fischeri)).